Consider the following 396-residue polypeptide: ATP phosphoribosyltransferase regulatory subunit (396 aa).

It belongs to the class-II aminoacyl-tRNA synthetase family. HisZ subfamily. As to quaternary structure, heteromultimer composed of HisG and HisZ subunits.

It is found in the cytoplasm. It functions in the pathway amino-acid biosynthesis; L-histidine biosynthesis; L-histidine from 5-phospho-alpha-D-ribose 1-diphosphate: step 1/9. In terms of biological role, required for the first step of histidine biosynthesis. May allow the feedback regulation of ATP phosphoribosyltransferase activity by histidine. This Cellvibrio japonicus (strain Ueda107) (Pseudomonas fluorescens subsp. cellulosa) protein is ATP phosphoribosyltransferase regulatory subunit.